The following is a 410-amino-acid chain: MIQKPRGTRDFLPAEMAQRRFVEQKMRAVAATFGYGEIVTPMFEELELFTIKSGEGIINEMYAFEDKGGRKITLRPEITAAVLRAYVNEAQMAPKPLRWFYFAECFRYERPQKGRYRQFWQFGSELIGADSAAADAEVISLAYELLRCTGVRFVMKVGHLAPMKHLLSGLDAPSQKQVMAALDKRDMDLLGTTLASLDSSDLFEPLKGLVTAKTLPEIFAVTGDIPEKARIEETFGYLEAQNIPFEQNFGIARGLDYYTGMVFEGFADNLGAENQILGGGVYRLAHLFGGKDVPSCGFGIGFDRVLVSLGEITPQTIPVVAVICTPETRIPAYNAASALRSAGITAVMDLLDRGFGAQLSSALKSGASFAVVIGEKEAAAGMITLKDLATAVQTEMSIDNAIEVIHGSCR.

The protein belongs to the class-II aminoacyl-tRNA synthetase family.

The protein resides in the cytoplasm. The catalysed reaction is tRNA(His) + L-histidine + ATP = L-histidyl-tRNA(His) + AMP + diphosphate + H(+). This is Histidine--tRNA ligase from Methanocorpusculum labreanum (strain ATCC 43576 / DSM 4855 / Z).